The following is a 798-amino-acid chain: Copalyl diphosphate synthase 1, chloroplastic (798 aa).

Residues 1 to 72 constitute a chloroplast transit peptide; the sequence is MASLSTMHLI…SKVAGINRVA (72 aa). Residue K251 coordinates substrate. D383 and D385 together coordinate Mg(2+). The DXDD motif signature appears at 383–386; it reads DIDD. A substrate-binding site is contributed by K469.

Belongs to the terpene synthase family. Tpsc subfamily. It depends on Mg(2+) as a cofactor. In terms of tissue distribution, highly expressed in roots, and, at low levels, in stems and leaves.

It is found in the plastid. It localises to the chloroplast. It catalyses the reaction (2E,6E,10E)-geranylgeranyl diphosphate = (+)-copalyl diphosphate. It functions in the pathway secondary metabolite biosynthesis; terpenoid biosynthesis. Functionally, involved in the biosynthesis of ent-kaurene diterpenoids natural products such as oridonin, miltiradiene, eriocalyxin B and nezukol, known to exhibit antitumor, anti-inflammatory and antibacterial activities. Catalyzes the conversion of (2E,6E,10E)-geranylgeranyl diphosphate (GGPP) to (+)-copalyl diphosphate ((+)-CPP). The protein is Copalyl diphosphate synthase 1, chloroplastic of Isodon rubescens (Rabdosia rubescens).